Here is a 266-residue protein sequence, read N- to C-terminus: Translation initiation factor 2 subunit alpha (266 aa).

An S1 motif domain is found at 12–83 (GDIVIGTVKD…RKGHIDLSLK (72 aa)).

This sequence belongs to the eIF-2-alpha family. As to quaternary structure, heterotrimer composed of an alpha, a beta and a gamma chain.

Functionally, eIF-2 functions in the early steps of protein synthesis by forming a ternary complex with GTP and initiator tRNA. This Methanocaldococcus jannaschii (strain ATCC 43067 / DSM 2661 / JAL-1 / JCM 10045 / NBRC 100440) (Methanococcus jannaschii) protein is Translation initiation factor 2 subunit alpha (eif2a).